The following is a 179-amino-acid chain: ATP-dependent protease subunit HslV (179 aa).

The active site involves T7. 3 residues coordinate Na(+): G162, C165, and T168.

This sequence belongs to the peptidase T1B family. HslV subfamily. In terms of assembly, a double ring-shaped homohexamer of HslV is capped on each side by a ring-shaped HslU homohexamer. The assembly of the HslU/HslV complex is dependent on binding of ATP.

The protein localises to the cytoplasm. The enzyme catalyses ATP-dependent cleavage of peptide bonds with broad specificity.. Allosterically activated by HslU binding. Protease subunit of a proteasome-like degradation complex believed to be a general protein degrading machinery. This chain is ATP-dependent protease subunit HslV, found in Bordetella petrii (strain ATCC BAA-461 / DSM 12804 / CCUG 43448).